A 785-amino-acid chain; its full sequence is Terminal nucleotidyltransferase 4A (785 aa).

The tract at residues 56-184 is disordered; the sequence is AAGRAAPAAG…QFHPGRRKRE (129 aa). The span at 68–85 shows a compositional bias: pro residues; the sequence is GPAPAASSPPPAPGPAAL. 2 stretches are compositionally biased toward low complexity: residues 86-98 and 106-145; these read PPAL…PAAD and SPSL…AGSG. Mg(2+) contacts are provided by aspartate 290 and aspartate 292. ATP is bound by residues glycine 353, lysine 378, serine 396, and tyrosine 397. Residues 421–480 form the PAP-associated domain; that stretch reads NLGMLLVEFFELYGRNFNYLKTGIRIKEGGAYIAKEEIMKAMTSGYRPSMLCIEDPLLPG. The ATP site is built by asparagine 481 and arginine 485. Positions 593–611 are enriched in low complexity; the sequence is PQLLSSGSSASSVSSLSGS. Disordered stretches follow at residues 593–625 and 731–785; these read PQLL…TPSV and KGSH…SLSR. Residues 757-774 show a composition bias toward basic residues; sequence RGHHQYNRTGWRRKKHAH.

This sequence belongs to the DNA polymerase type-B-like family. In terms of assembly, component of a nuclear TRAMP-like complex, an ATP-dependent exosome regulatory complex consisting of a helicase (MTREX), an oligadenylate polymerase (TENT4B or TENT4A), and a substrate specific RNA-binding factor (ZCCHC7 or ZCCHC8). Several TRAMP-like complexes exist with specific compositions and are associated with nuclear, or nucleolar RNA exosomes. Mg(2+) serves as cofactor. It depends on Mn(2+) as a cofactor.

The protein resides in the cytoplasm. It localises to the nucleus. The protein localises to the nucleoplasm. The catalysed reaction is RNA(n) + ATP = RNA(n)-3'-adenine ribonucleotide + diphosphate. Functionally, terminal nucleotidyltransferase that catalyzes preferentially the transfer of ATP and GTP on RNA 3' poly(A) tail creating a heterogeneous 3' poly(A) tail leading to mRNAs stabilization by protecting mRNAs from active deadenylation. Also functions as a catalytic subunit of a TRAMP-like complex which has a poly(A) RNA polymerase activity and is involved in a post-transcriptional quality control mechanism. Polyadenylation with short oligo(A) tails is required for the degradative activity of the exosome on several of its nuclear RNA substrates. Has no terminal uridylyltransferase activity, and does not play a role in replication-dependent histone mRNA degradation via uridylation. This chain is Terminal nucleotidyltransferase 4A, found in Mus musculus (Mouse).